A 505-amino-acid polypeptide reads, in one-letter code: Glutamate--tRNA ligase (505 aa).

Positions 12-22 (PSPTGALHIGG) match the 'HIGH' region motif. Positions 260 to 264 (KLSKR) match the 'KMSKS' region motif. ATP is bound at residue Lys-263.

Belongs to the class-I aminoacyl-tRNA synthetase family. Glutamate--tRNA ligase type 1 subfamily. Monomer.

It localises to the cytoplasm. The enzyme catalyses tRNA(Glu) + L-glutamate + ATP = L-glutamyl-tRNA(Glu) + AMP + diphosphate. Catalyzes the attachment of glutamate to tRNA(Glu) in a two-step reaction: glutamate is first activated by ATP to form Glu-AMP and then transferred to the acceptor end of tRNA(Glu). This is Glutamate--tRNA ligase from Bacteroides fragilis (strain ATCC 25285 / DSM 2151 / CCUG 4856 / JCM 11019 / LMG 10263 / NCTC 9343 / Onslow / VPI 2553 / EN-2).